Consider the following 122-residue polypeptide: Small ribosomal subunit protein uS13 (122 aa).

Residues 95 to 122 (GLPVHGQRTHTNARTRKGPRRGAVGKKK) are disordered.

Belongs to the universal ribosomal protein uS13 family. As to quaternary structure, part of the 30S ribosomal subunit. Forms a loose heterodimer with protein S19. Forms two bridges to the 50S subunit in the 70S ribosome.

Its function is as follows. Located at the top of the head of the 30S subunit, it contacts several helices of the 16S rRNA. In the 70S ribosome it contacts the 23S rRNA (bridge B1a) and protein L5 of the 50S subunit (bridge B1b), connecting the 2 subunits; these bridges are implicated in subunit movement. Contacts the tRNAs in the A and P-sites. This chain is Small ribosomal subunit protein uS13, found in Desulfovibrio desulfuricans (strain ATCC 27774 / DSM 6949 / MB).